We begin with the raw amino-acid sequence, 96 residues long: UPF0235 protein VV1_1522 (96 aa).

It belongs to the UPF0235 family.

The protein is UPF0235 protein VV1_1522 of Vibrio vulnificus (strain CMCP6).